A 77-amino-acid chain; its full sequence is Conotoxin Cl6.12 (77 aa).

Residues 1–20 (MKFYLLLTAALLLTAVIIEA) form the signal peptide. A propeptide spanning residues 21-36 (APTDHQDEARDLMREE) is cleaved from the precursor. 3 cysteine pairs are disulfide-bonded: C43-C58, C51-C62, and C57-C68.

Expressed by the venom duct.

It is found in the secreted. The sequence is that of Conotoxin Cl6.12 from Californiconus californicus (California cone).